The primary structure comprises 382 residues: Serine protease 43 (382 aa).

An N-terminal signal peptide occupies residues 1–27 (MGGFCGADRGGFLALLVWLQLLQPLFS). The disordered stretch occupies residues 30-97 (YKPREDSGVM…SGTTTKITLE (68 aa)). 2 stretches are compositionally biased toward polar residues: residues 56-68 (AQQSRLKSLSISH) and 85-95 (GSPSGTTTKIT). The Peptidase S1 domain occupies 119–355 (VDPGSLSAGR…YNEWVSYVLS (237 aa)). An intrachain disulfide couples Cys-144 to Cys-160. Residues His-159 and Asp-205 each act as charge relay system in the active site. Cystine bridges form between Cys-239–Cys-313, Cys-272–Cys-293, and Cys-303–Cys-331. The active-site Charge relay system is the Ser-307. The chain crosses the membrane as a helical span at residues 362-382 (PMGVLVLYLSLVFPLALLVAL).

The protein belongs to the peptidase S1 family. Testis-specific. Expressed in germ cells at the stages from late pachytene spermatocytes to spermatids.

The protein localises to the cell membrane. Functionally, plays a role in spermatogenesis. Involved in germ cell survival during meiosis. Lacks protease activity in vitro. The protein is Serine protease 43 of Mus musculus (Mouse).